A 99-amino-acid polypeptide reads, in one-letter code: Large ribosomal subunit protein eL21 (99 aa).

It belongs to the eukaryotic ribosomal protein eL21 family.

The protein is Large ribosomal subunit protein eL21 of Pyrobaculum calidifontis (strain DSM 21063 / JCM 11548 / VA1).